We begin with the raw amino-acid sequence, 2201 residues long: Tenascin (2201 aa).

The N-terminal stretch at 1–22 is a signal peptide; it reads MGAMTQLLAGVFLAFLALATEG. N-linked (GlcNAc...) asparagine glycosylation is present at Asn38. Residues Ser65 and Ser70 each carry the phosphoserine modification. Ser72 bears the Phosphoserine; by FAM20C mark. O-linked (Xyl...) (chondroitin sulfate) serine glycosylation is present at Ser72. A coiled-coil region spans residues 118–145; sequence DVKELLSRLEELENLVSSLREQCTAGAG. N-linked (GlcNAc...) asparagine glycosylation is found at Asn166 and Asn184. Residues 174 to 186 enclose the EGF-like 1; incomplete domain; that stretch reads CVCEPGWKGPNCS. EGF-like domains lie at 186–217, 217–248, 248–280, 280–311, 311–342, 342–373, 373–404, 404–435, 435–466, 466–497, 497–528, 528–559, 559–590, and 590–621; these read SEPE…EDCS, SQLA…ADCS, SREI…DDCN, NKPL…EDCS, SELI…EDCG, GKPT…VDCS, SEKR…ADCG, GELK…EDCS, SQLR…YDCS, SDMS…EDCR, RDRQ…PDCA, AELS…KDCK, KEQR…LDCG, and GQHS…EDCS. 42 cysteine pairs are disulfide-bonded: Cys190–Cys200, Cys194–Cys205, Cys207–Cys216, Cys221–Cys231, Cys225–Cys236, Cys238–Cys247, Cys252–Cys263, Cys256–Cys268, Cys270–Cys279, Cys284–Cys294, Cys288–Cys299, Cys301–Cys310, Cys315–Cys325, Cys319–Cys330, Cys332–Cys341, Cys346–Cys356, Cys350–Cys361, Cys363–Cys372, Cys377–Cys387, Cys381–Cys392, Cys394–Cys403, Cys408–Cys418, Cys412–Cys423, Cys425–Cys434, Cys439–Cys449, Cys443–Cys454, Cys456–Cys465, Cys470–Cys480, Cys474–Cys485, Cys487–Cys496, Cys501–Cys511, Cys505–Cys516, Cys518–Cys527, Cys532–Cys542, Cys536–Cys547, Cys549–Cys558, Cys563–Cys573, Cys567–Cys578, Cys580–Cys589, Cys594–Cys604, Cys598–Cys609, and Cys611–Cys620. Asn327 carries N-linked (GlcNAc...) asparagine glycosylation. Fibronectin type-III domains follow at residues 625–715, 716–804, 805–894, 895–990, 991–1075, 1076–1165, 1167–1256, 1258–1350, 1351–1439, 1440–1531, 1533–1621, 1622–1711, 1712–1801, 1802–1888, and 1889–1977; these read PPKD…LPAP, EGLK…TRLD, APSQ…TGLD, APRN…TPKD, LQVS…EQAP, ELEN…TGET, NLGE…TEEV, DMGN…LPQL, GDLA…AKEP, EIGN…ALPL, ENLT…EAEP, EVDN…TAMG, SPKE…ALDG, PSGL…TDLD, and SPRD…IGLL. Asn788 carries N-linked (GlcNAc...) asparagine glycosylation. Thr905 carries the post-translational modification Phosphothreonine. Asn1018, Asn1034, Asn1079, Asn1093, Asn1119, Asn1184, Asn1210, Asn1261, Asn1275, Asn1301, Asn1366, Asn1392, Asn1445, Asn1455, Asn1485, and Asn1534 each carry an N-linked (GlcNAc...) asparagine glycan. An N-linked (GlcNAc...) asparagine glycan is attached at Asn1809. A Fibrinogen C-terminal domain is found at 1975–2190; that stretch reads GLLYPFPKDC…FAEMKLRPSN (216 aa). N-linked (GlcNAc...) asparagine glycosylation occurs at Asn2162.

It belongs to the tenascin family. Homohexamer; disulfide-linked. A homotrimer may be formed in the triple coiled-coil region and may be stabilized by disulfide rings at both ends. Two of such half-hexabrachions may be disulfide linked within the central globule. Interacts with CSPG4. Interacts (via the 3rd fibronectin type-III domain) with integrin ITGA9:ITGB1. In terms of tissue distribution, detected in fibroblasts (at protein level).

The protein resides in the secreted. It localises to the extracellular space. The protein localises to the extracellular matrix. In terms of biological role, extracellular matrix protein implicated in guidance of migrating neurons as well as axons during development, synaptic plasticity as well as neuronal regeneration. Promotes neurite outgrowth from cortical neurons grown on a monolayer of astrocytes. Ligand for integrins alpha-8/beta-1, alpha-9/beta-1, alpha-V/beta-3 and alpha-V/beta-6. In tumors, stimulates angiogenesis by elongation, migration and sprouting of endothelial cells. The chain is Tenascin (TNC) from Homo sapiens (Human).